The primary structure comprises 484 residues: Chromosomal replication initiator protein DnaA (484 aa).

The tract at residues 1-74 (MEKSKNIWSL…ILTKNGYNNV (74 aa)) is domain I, interacts with DnaA modulators. A domain II region spans residues 74–139 (VTIVFTNQPP…EEEPTNFKNP (66 aa)). The domain III, AAA+ region stretch occupies residues 140 to 356 (FLKKRYTFEN…AAVTKLKAYI (217 aa)). Residues glycine 184, glycine 186, lysine 187, and threonine 188 each coordinate ATP. A domain IV, binds dsDNA region spans residues 357–484 (DLDNIEIDID…TELMNKIKKN (128 aa)).

Belongs to the DnaA family. Oligomerizes as a right-handed, spiral filament on DNA at oriC.

The protein localises to the cytoplasm. Functionally, plays an essential role in the initiation and regulation of chromosomal replication. ATP-DnaA binds to the origin of replication (oriC) to initiate formation of the DNA replication initiation complex once per cell cycle. Binds the DnaA box (a 9 base pair repeat at the origin) and separates the double-stranded (ds)DNA. Forms a right-handed helical filament on oriC DNA; dsDNA binds to the exterior of the filament while single-stranded (ss)DNA is stabiized in the filament's interior. The ATP-DnaA-oriC complex binds and stabilizes one strand of the AT-rich DNA unwinding element (DUE), permitting loading of DNA polymerase. After initiation quickly degrades to an ADP-DnaA complex that is not apt for DNA replication. Binds acidic phospholipids. In Borrelia garinii subsp. bavariensis (strain ATCC BAA-2496 / DSM 23469 / PBi) (Borreliella bavariensis), this protein is Chromosomal replication initiator protein DnaA.